Reading from the N-terminus, the 349-residue chain is Alcohol dehydrogenase 1 (349 aa).

Zn(2+)-binding residues include Cys-46, His-69, Cys-100, Cys-103, Cys-106, Cys-114, and Cys-156. NAD(+) contacts are provided by residues 180–186, Asp-204, Lys-208, 270–272, and Arg-342; these read GAGGGLG and VGL.

Belongs to the zinc-containing alcohol dehydrogenase family. As to quaternary structure, homotetramer. The cofactor is Zn(2+).

It carries out the reaction a primary alcohol + NAD(+) = an aldehyde + NADH + H(+). The enzyme catalyses a secondary alcohol + NAD(+) = a ketone + NADH + H(+). In Caenorhabditis elegans, this protein is Alcohol dehydrogenase 1.